Consider the following 216-residue polypeptide: FMN-dependent NADH:quinone oxidoreductase (216 aa).

FMN contacts are provided by residues S10 and 15–17 (SIS).

Belongs to the azoreductase type 1 family. Homodimer. The cofactor is FMN.

The catalysed reaction is 2 a quinone + NADH + H(+) = 2 a 1,4-benzosemiquinone + NAD(+). It carries out the reaction N,N-dimethyl-1,4-phenylenediamine + anthranilate + 2 NAD(+) = 2-(4-dimethylaminophenyl)diazenylbenzoate + 2 NADH + 2 H(+). Functionally, quinone reductase that provides resistance to thiol-specific stress caused by electrophilic quinones. Its function is as follows. Also exhibits azoreductase activity. Catalyzes the reductive cleavage of the azo bond in aromatic azo compounds to the corresponding amines. This chain is FMN-dependent NADH:quinone oxidoreductase, found in Nocardia farcinica (strain IFM 10152).